A 139-amino-acid polypeptide reads, in one-letter code: Large-conductance mechanosensitive channel (139 aa).

Helical transmembrane passes span 14–34 and 86–106; these read VVDMAVGIIIGAAFGAIVKSL and GLFINAVVSFTIVAFAVFLLI.

This sequence belongs to the MscL family. Homopentamer.

It is found in the cell inner membrane. Channel that opens in response to stretch forces in the membrane lipid bilayer. May participate in the regulation of osmotic pressure changes within the cell. This Methylobacillus flagellatus (strain ATCC 51484 / DSM 6875 / VKM B-1610 / KT) protein is Large-conductance mechanosensitive channel.